Reading from the N-terminus, the 627-residue chain is Interferon-induced GTP-binding protein MxB (627 aa).

Positions 34-307 constitute a Dynamin-type G domain; it reads DLALPAIAVI…LVHHIQRSLP (274 aa). Positions 44 to 51 are G1 motif; it reads GDQSSGKS. Residue 44–51 participates in GTP binding; that stretch reads GDQSSGKS. The segment at 69 to 71 is G2 motif; it reads VTR. The interval 145-148 is G3 motif; it reads DLPG. Residues 145–149 and 214–217 each bind GTP; these read DLPGI and TKPD. Positions 214–217 are G4 motif; that stretch reads TKPD. The segment at 246–249 is G5 motif; that stretch reads RCRG. One can recognise a GED domain in the interval 541–627; that stretch reads LSEMKLHLES…MKAQNLLATY (87 aa).

This sequence belongs to the TRAFAC class dynamin-like GTPase superfamily. Dynamin/Fzo/YdjA family.

The protein localises to the cytoplasm. This Danio rerio (Zebrafish) protein is Interferon-induced GTP-binding protein MxB (mxb).